The chain runs to 617 residues: mRNA export factor MEX67 (617 aa).

Gly residues predominate over residues 1 to 10 (MSYRGRGGGY). The disordered stretch occupies residues 1–24 (MSYRGRGGGYNNNRGQFSSGPHQH). LRR repeat units follow at residues 185-206 (DVDS…TSMA), 211-232 (KLQN…ETWR), and 237-258 (FLRE…AEIQ). The 191-residue stretch at 309–499 (LATNFIANYL…MIVASDTLLI (191 aa)) folds into the NTF2 domain. Disordered stretches follow at residues 442–469 (EVDG…HKRI) and 513–554 (LPSN…TTAD). Low complexity-rich tracts occupy residues 445–459 (GSAS…GGSR) and 526–542 (ATST…TTPQ). The TAP-C domain maps to 565–617 (QIQQELLVKILLETKLNINYGIMLCEQSNWDYQQASVNFKNSAASLPSDAFVQ).

It belongs to the NXF family. Interacts with nucleoporin complex protein MTR2.

The protein resides in the nucleus. The protein localises to the cytoplasm. Involved in the export of mRNA from the nucleus to the cytoplasm. In Candida albicans (strain SC5314 / ATCC MYA-2876) (Yeast), this protein is mRNA export factor MEX67.